Reading from the N-terminus, the 81-residue chain is DNA-directed RNA polymerase subunit Rpo6 (81 aa).

The protein belongs to the archaeal Rpo6/eukaryotic RPB6 RNA polymerase subunit family. As to quaternary structure, part of the RNA polymerase complex.

Its subcellular location is the cytoplasm. It catalyses the reaction RNA(n) + a ribonucleoside 5'-triphosphate = RNA(n+1) + diphosphate. Functionally, DNA-dependent RNA polymerase (RNAP) catalyzes the transcription of DNA into RNA using the four ribonucleoside triphosphates as substrates. This is DNA-directed RNA polymerase subunit Rpo6 from Thermofilum pendens (strain DSM 2475 / Hrk 5).